A 142-amino-acid chain; its full sequence is Maximins y/H11 (142 aa).

An N-terminal signal peptide occupies residues 1–18 (MNFKYIVAVSFLITSGYA). A propeptide spanning residues 19 to 43 (ESVKNDEQSLSQRDVLEEESLREIR) is cleaved from the precursor. Residue phenylalanine 68 is modified to Phenylalanine amide. The propeptide occupies 72 to 121 (SAEDHEVMKRLEAVIRDLDSLDHPEEASERETRGFNQEEIANLFTKKEKR). Isoleucine 141 carries the isoleucine amide modification.

The protein belongs to the bombinin family. Expressed by the skin glands.

It localises to the secreted. Maximin-y shows antimicrobial activity against bacteria and against the fungus C.albicans. It has little hemolytic activity. In terms of biological role, maximin-H11 shows antimicrobial activity against bacteria and against the fungus C.albicans. Shows strong hemolytic activity. The polypeptide is Maximins y/H11 (Bombina maxima (Giant fire-bellied toad)).